A 299-amino-acid chain; its full sequence is tRNA dimethylallyltransferase (299 aa).

13 to 20 (GPTASGKT) contributes to the ATP binding site. 15–20 (TASGKT) is a binding site for substrate. The interval 38–41 (DSRQ) is interaction with substrate tRNA.

Belongs to the IPP transferase family. In terms of assembly, monomer. Mg(2+) serves as cofactor.

It catalyses the reaction adenosine(37) in tRNA + dimethylallyl diphosphate = N(6)-dimethylallyladenosine(37) in tRNA + diphosphate. Functionally, catalyzes the transfer of a dimethylallyl group onto the adenine at position 37 in tRNAs that read codons beginning with uridine, leading to the formation of N6-(dimethylallyl)adenosine (i(6)A). The protein is tRNA dimethylallyltransferase of Prochlorococcus marinus (strain MIT 9301).